The following is a 494-amino-acid chain: NAD(+) hydrolase ThsA (494 aa).

The Deacetylase sirtuin-type domain occupies 11–295; sequence ATDKEVLIKE…TILQRYCRSK (285 aa). NAD(+) contacts are provided by alanine 30, aspartate 119, and histidine 157. Histidine 157 (proton acceptor) is an active-site residue. Residues 296 to 494 form an SLOG (STALD) domain, binds 3'cADPR region; it reads ILISGSAVEY…KIITALRAGR (199 aa). 3'cADPR contacts are provided by glycine 300, serine 301, leucine 339, phenylalanine 370, arginine 388, lysine 405, glycine 416, and glutamate 420.

The protein belongs to the soluble Thoeris ThsA family. Homotetramer.

It is found in the cytoplasm. It carries out the reaction NAD(+) + H2O = ADP-D-ribose + nicotinamide + H(+). With respect to regulation, probably activated by a signal molecule generated by endogenous ThsB1 and/or ThsB2. Can also be activated by the signal generated by ThsB of B.cereus. The activating molecule might be 3' cyclic ADP-D-ribose (3'cADPR). Functionally, probable NAD(+) hydrolyzing component (NADase) of the Thoeris antiviral defense system, composed of ThsA, TIR1 (thsB1) and TIR2 (thsB2). Activated by a signal molecule generated by endogenous TIR1, TIR2 or ThsB from B.cereus. After activation it binds and hydrolyzes NAD(+), leading to cell death and inhibition of phage replication. Expression of Thoeris in B.subtilis (strain BEST7003) confers resistance to phages phi29, phi3T, SPBeta, SBSphi11, SBSphi13, SBSphiJ, SPO1 and SPR but not SBSphiC. The TIR paralogs confer overlapping resistance to different phages. The chain is NAD(+) hydrolase ThsA from Cytobacillus dafuensis (Bacillus dafuensis).